We begin with the raw amino-acid sequence, 678 residues long: Penicillin-binding protein activator LpoA (678 aa).

The signal sequence occupies residues 1–26 (MVPSTFSRLKAARCLPVVLAALIFAG). Cysteine 27 is lipidated: N-palmitoyl cysteine. The S-diacylglycerol cysteine moiety is linked to residue cysteine 27. Disordered stretches follow at residues 304–338 (AEQP…SVPV) and 495–530 (IALT…QFTN). Over residues 513–529 (TTNNPTLQTTPTDDQFT) the composition is skewed to low complexity.

The protein belongs to the LpoA family. Interacts with PBP1a.

Its subcellular location is the cell outer membrane. Functionally, regulator of peptidoglycan synthesis that is essential for the function of penicillin-binding protein 1A (PBP1a). In Escherichia coli O6:H1 (strain CFT073 / ATCC 700928 / UPEC), this protein is Penicillin-binding protein activator LpoA.